A 1128-amino-acid polypeptide reads, in one-letter code: Apoptosis-stimulating of p53 protein 2 (1128 aa).

The segment at 85 to 120 (PPNRDIVSGPRSQDPSVKRNGVKVPGEHRRKENGVN) is disordered. The segment at 332-348 (NLPQQAVSAPSRVAAVG) is interaction with APPBP1. A disordered region spans residues 393–436 (MRSGAASQSKGSKAHPASPDWNPSNADLLPSQGSSVPQSAGTAL). Residues 413 to 433 (WNPSNADLLPSQGSSVPQSAG) are compositionally biased toward polar residues. Residues Ser479, Ser555, Ser568, Ser571, and Ser575 each carry the phosphoserine modification. 2 disordered regions span residues 549–596 (QARM…FPPA) and 654–705 (NPQQ…LPFL). Positions 562-574 (GQDQVLSPASKQE) are enriched in polar residues. The segment covering 654–669 (NPQQHPENIYSCSQGK) has biased composition (polar residues). Positions 684–693 (HESHENERIP) are enriched in basic and acidic residues. A phosphoserine mark is found at Ser697, Ser713, and Ser736. 3 disordered regions span residues 723–748 (KLSN…GPNI), 802–824 (SLVP…SDVP), and 870–907 (PPPP…KRTN). The short motif at 866–875 (YPPYPPPPYP) is the SH3-binding element. Residues 876–1128 (SGEPEVSEED…RIKPRQRSLA (253 aa)) form a mediates interaction with APC2 region. ANK repeat units follow at residues 958–987 (EGIT…NVNA) and 991–1020 (DGWT…AVFA). In terms of domain architecture, SH3 spans 1057–1119 (MNKGVIYALW…PRNLLGLYPR (63 aa)).

Belongs to the ASPP family. As to quaternary structure, interacts with P53/TP53; the interaction promotes pro-apoptotic activity. Interacts with BCL2. Interacts with protein phosphatase 1. Interacts with RELA NF-kappa-B subunit. This interaction probably prevents the activation of apoptosis, possibly by preventing its interaction with p53/TP53. Interacts with APC2 and APPBP1. Interacts with DDX42 (via the C-terminus); the interaction is not inhibited by TP53BP2 ubiquitination and is independent of p53/TP53.

Its subcellular location is the cytoplasm. The protein resides in the perinuclear region. It is found in the nucleus. Functionally, regulator that plays a central role in regulation of apoptosis and cell growth via its interactions with proteins such as TP53. Regulates p53/TP53 by enhancing the DNA binding and transactivation function of p53/TP53 on the promoters of proapoptotic genes in vivo. Inhibits the ability of APPBP1 to conjugate NEDD8 to CUL1, and thereby decreases APPBP1 ability to induce apoptosis. Impedes cell cycle progression at G2/M. Its apoptosis-stimulating activity is inhibited by its interaction with DDX42. The sequence is that of Apoptosis-stimulating of p53 protein 2 (Tp53bp2) from Mus musculus (Mouse).